We begin with the raw amino-acid sequence, 880 residues long: Interference hedgehog (880 aa).

Residues 1–20 (MTLLTSSLLFFSLLTSRLEA) form the signal peptide. Residues 21-703 (IPVLEKSPAH…ETFNMSPMLT (683 aa)) are Extracellular-facing. 4 Ig-like C2-type domains span residues 45 to 142 (PGVR…IARL), 132 to 234 (PLVV…IQLT), 252 to 340 (PHLL…YIKV), and 346 to 432 (PQIV…LQVN). 4 disulfide bridges follow: Cys-68–Cys-126, Cys-173–Cys-220, Cys-276–Cys-324, and Cys-367–Cys-414. Residues Asn-102 and Asn-209 are each glycosylated (N-linked (GlcNAc...) asparagine). A disordered region spans residues 426–467 (GTLLQVNPKQIQEPRESGGTHRPKPNQGSKQKQMYPPTPPNV). Fibronectin type-III domains are found at residues 461–567 (PPTP…LQPG) and 575–670 (VPEL…TQRP). An N-linked (GlcNAc...) asparagine glycan is attached at Asn-466. Heparin is bound by residues Arg-497, Lys-501, Lys-503, and Arg-541. A glycan (N-linked (GlcNAc...) asparagine) is linked at Asn-557. The interval 662–697 (LKQGRTQRPKTSTTEEPTLQMGDRDTTTPSHNETFN) is disordered. Composition is skewed to polar residues over residues 665 to 678 (GRTQ…TEEP) and 688 to 697 (TTPSHNETFN). The N-linked (GlcNAc...) asparagine glycan is linked to Asn-693. Residues 704-724 (GTIGGGAVLILLLISTCLCVC) form a helical membrane-spanning segment. The Cytoplasmic portion of the chain corresponds to 725–880 (RRRSSRSRGN…SSGSLNSVGV (156 aa)). 2 disordered regions span residues 728-762 (SSRS…QRQR) and 775-880 (QQQQ…SVGV). Composition is skewed to low complexity over residues 823-837 (RAGG…NNNN) and 864-880 (SSRS…SVGV).

It belongs to the immunoglobulin superfamily. IHOG family. As to quaternary structure, homodimer. Heterotetramer; 2 iHog chains bind 2 hh chains when facilitated by heparin, heparin is required to promote high-affinity interactions between hh and iHog.

The protein localises to the membrane. In terms of biological role, mediates response to the active Hedgehog (Hh) protein signal in embryos, functioning upstream or at the level of patched (ptc). This is Interference hedgehog from Drosophila yakuba (Fruit fly).